Reading from the N-terminus, the 102-residue chain is uncharacterized protein (102 aa).

The helical transmembrane segment at 29–52 (IGSTYFCFGGAIFILVAPLTNLVY) threads the bilayer.

It localises to the membrane. This is an uncharacterized protein from Saccharomyces cerevisiae (strain ATCC 204508 / S288c) (Baker's yeast).